The following is a 354-amino-acid chain: Histone-lysine N-methyltransferase SUVR3 (354 aa).

The 46-residue stretch at 143–188 folds into the Pre-SET domain; the sequence is SGCECERCEEGYCKCLAFAGMEEIANECGSGCGCGSDCSNRVTQKG. Zn(2+) contacts are provided by C145, C147, C150, C155, C157, C170, C174, C176, and C180. In terms of domain architecture, SET spans 191 to 323; it reads VSLKIVRDEK…AEEELSFSYG (133 aa). S-adenosyl-L-methionine-binding positions include 201 to 203 and 281 to 282; these read KGW and NH. Zn(2+) is bound at residue C284. Y322 is an S-adenosyl-L-methionine binding site. One can recognise a Post-SET domain in the interval 334-350; sequence DKLNCSCGSSCCLGTLP. Zn(2+) is bound by residues C338, C340, and C345.

This sequence belongs to the class V-like SAM-binding methyltransferase superfamily.

Its subcellular location is the nucleus. The protein resides in the chromosome. The enzyme catalyses L-lysyl-[histone] + S-adenosyl-L-methionine = N(6)-methyl-L-lysyl-[histone] + S-adenosyl-L-homocysteine + H(+). Histone methyltransferase. The polypeptide is Histone-lysine N-methyltransferase SUVR3 (SUVR3) (Arabidopsis thaliana (Mouse-ear cress)).